The following is a 248-amino-acid chain: NADP-dependent 3-hydroxy acid dehydrogenase YdfG (248 aa).

NADP(+) contacts are provided by residues 7–12 (GATAGF), 32–33 (RR), 54–55 (DV), and Asn81. Substrate is bound at residue Ser134. NADP(+)-binding positions include Tyr147, Lys151, and 177 to 185 (PGLVGGTEF). Tyr147 functions as the Proton acceptor in the catalytic mechanism.

Belongs to the short-chain dehydrogenases/reductases (SDR) family. In terms of assembly, homotetramer.

The catalysed reaction is 3-hydroxypropanoate + NADP(+) = 3-oxopropanoate + NADPH + H(+). The enzyme catalyses L-allo-threonine + NADP(+) = aminoacetone + CO2 + NADPH. Functionally, NADP-dependent dehydrogenase with broad substrate specificity acting on 3-hydroxy acids. Catalyzes the NADP-dependent oxidation of L-allo-threonine to L-2-amino-3-keto-butyrate, which is spontaneously decarboxylated into aminoacetone. Also acts on D-threonine, L-serine, D-serine, D-3-hydroxyisobutyrate, L-3-hydroxyisobutyrate, D-glycerate and L-glycerate. Able to catalyze the reduction of the malonic semialdehyde to 3-hydroxypropionic acid. YdfG is apparently supplementing RutE, the presumed malonic semialdehyde reductase involved in pyrimidine degradation since both are able to detoxify malonic semialdehyde. In Escherichia coli (strain K12), this protein is NADP-dependent 3-hydroxy acid dehydrogenase YdfG.